The primary structure comprises 466 residues: Ribulose bisphosphate carboxylase large chain (466 aa).

N6,N6,N6-trimethyllysine is present on K5. Positions 114 and 164 each coordinate substrate. K166 functions as the Proton acceptor in the catalytic mechanism. A substrate-binding site is contributed by K168. Mg(2+) is bound by residues K192, D194, and E195. The residue at position 192 (K192) is an N6-carboxylysine. The active-site Proton acceptor is H285. Substrate is bound by residues R286, H318, and S370.

It belongs to the RuBisCO large chain family. Type I subfamily. As to quaternary structure, heterohexadecamer of 8 large chains and 8 small chains; disulfide-linked. The disulfide link is formed within the large subunit homodimers. Requires Mg(2+) as cofactor. Post-translationally, the disulfide bond which can form in the large chain dimeric partners within the hexadecamer appears to be associated with oxidative stress and protein turnover.

The protein resides in the plastid. Its subcellular location is the chloroplast. It carries out the reaction 2 (2R)-3-phosphoglycerate + 2 H(+) = D-ribulose 1,5-bisphosphate + CO2 + H2O. The enzyme catalyses D-ribulose 1,5-bisphosphate + O2 = 2-phosphoglycolate + (2R)-3-phosphoglycerate + 2 H(+). Its function is as follows. RuBisCO catalyzes two reactions: the carboxylation of D-ribulose 1,5-bisphosphate, the primary event in carbon dioxide fixation, as well as the oxidative fragmentation of the pentose substrate in the photorespiration process. Both reactions occur simultaneously and in competition at the same active site. The polypeptide is Ribulose bisphosphate carboxylase large chain (Averrhoa carambola (Star fruit)).